The primary structure comprises 332 residues: Glycerol-3-phosphate dehydrogenase [NAD(P)+] (332 aa).

3 residues coordinate NADPH: Trp-11, Arg-30, and Lys-108. Sn-glycerol 3-phosphate-binding residues include Lys-108, Gly-137, and Ser-139. An NADPH-binding site is contributed by Ala-141. The sn-glycerol 3-phosphate site is built by Lys-192, Asp-245, Ser-255, Arg-256, and Asn-257. Residue Lys-192 is the Proton acceptor of the active site. Arg-256 contributes to the NADPH binding site. Residues Val-280 and Glu-282 each contribute to the NADPH site.

The protein belongs to the NAD-dependent glycerol-3-phosphate dehydrogenase family.

The protein resides in the cytoplasm. It carries out the reaction sn-glycerol 3-phosphate + NAD(+) = dihydroxyacetone phosphate + NADH + H(+). The catalysed reaction is sn-glycerol 3-phosphate + NADP(+) = dihydroxyacetone phosphate + NADPH + H(+). It participates in membrane lipid metabolism; glycerophospholipid metabolism. Its function is as follows. Catalyzes the reduction of the glycolytic intermediate dihydroxyacetone phosphate (DHAP) to sn-glycerol 3-phosphate (G3P), the key precursor for phospholipid synthesis. The protein is Glycerol-3-phosphate dehydrogenase [NAD(P)+] of Burkholderia cenocepacia (strain HI2424).